The sequence spans 255 residues: 5'-nucleotidase SurE (255 aa).

Residues aspartate 8, aspartate 9, serine 39, and asparagine 91 each contribute to the a divalent metal cation site.

It belongs to the SurE nucleotidase family. A divalent metal cation serves as cofactor.

Its subcellular location is the cytoplasm. It carries out the reaction a ribonucleoside 5'-phosphate + H2O = a ribonucleoside + phosphate. Functionally, nucleotidase that shows phosphatase activity on nucleoside 5'-monophosphates. The polypeptide is 5'-nucleotidase SurE (Acinetobacter baumannii (strain AB0057)).